The following is a 412-amino-acid chain: Short-chain specific acyl-CoA dehydrogenase, mitochondrial (412 aa).

The N-terminal 24 residues, 1-24, are a transit peptide targeting the mitochondrion; it reads MAATLLARACGLVRGAPWPWGWRR. Phosphothreonine is present on Thr27. Lys51 bears the N6-acetyllysine; alternate mark. Lys51 carries the post-translational modification N6-succinyllysine; alternate. Lys72 is subject to N6-acetyllysine. Lys129 is modified (N6-acetyllysine; alternate). Lys129 carries the N6-succinyllysine; alternate modification. Residues 152–161 and 185–187 each bind FAD; these read FALSEPGNGS and WIT. A substrate-binding site is contributed by Ser161. Lys208 is subject to N6-acetyllysine. Lys262 is subject to N6-acetyllysine; alternate. Lys262 carries the N6-succinyllysine; alternate modification. 269–272 is a binding site for substrate; it reads DTGR. Arg297 provides a ligand contact to FAD. The residue at position 306 (Lys306) is an N6-acetyllysine; alternate. Lys306 carries the post-translational modification N6-succinyllysine; alternate. Residues Gln308 and 365–369 each bind FAD; that span reads QILGG. The active-site Proton acceptor is Glu392. Residue Gly393 participates in substrate binding. Residue 394–396 participates in FAD binding; the sequence is TSE.

It belongs to the acyl-CoA dehydrogenase family. As to quaternary structure, homotetramer. It depends on FAD as a cofactor.

It localises to the mitochondrion matrix. It carries out the reaction a short-chain 2,3-saturated fatty acyl-CoA + oxidized [electron-transfer flavoprotein] + H(+) = a short-chain (2E)-enoyl-CoA + reduced [electron-transfer flavoprotein]. The enzyme catalyses butanoyl-CoA + oxidized [electron-transfer flavoprotein] + H(+) = (2E)-butenoyl-CoA + reduced [electron-transfer flavoprotein]. It catalyses the reaction pentanoyl-CoA + oxidized [electron-transfer flavoprotein] + H(+) = (2E)-pentenoyl-CoA + reduced [electron-transfer flavoprotein]. The catalysed reaction is hexanoyl-CoA + oxidized [electron-transfer flavoprotein] + H(+) = (2E)-hexenoyl-CoA + reduced [electron-transfer flavoprotein]. It functions in the pathway lipid metabolism; mitochondrial fatty acid beta-oxidation. Functionally, short-chain specific acyl-CoA dehydrogenase is one of the acyl-CoA dehydrogenases that catalyze the first step of mitochondrial fatty acid beta-oxidation, an aerobic process breaking down fatty acids into acetyl-CoA and allowing the production of energy from fats. The first step of fatty acid beta-oxidation consists in the removal of one hydrogen from C-2 and C-3 of the straight-chain fatty acyl-CoA thioester, resulting in the formation of trans-2-enoyl-CoA. Among the different mitochondrial acyl-CoA dehydrogenases, short-chain specific acyl-CoA dehydrogenase acts specifically on acyl-CoAs with saturated 4 to 6 carbons long primary chains. The polypeptide is Short-chain specific acyl-CoA dehydrogenase, mitochondrial (ACADS) (Bos taurus (Bovine)).